The following is a 199-amino-acid chain: FMN-dependent NADH:quinone oxidoreductase 1 (199 aa).

Residues Ser10, 17-19, and 87-90 contribute to the FMN site; these read SNS and MYNF.

The protein belongs to the azoreductase type 1 family. In terms of assembly, homodimer. Requires FMN as cofactor.

The catalysed reaction is 2 a quinone + NADH + H(+) = 2 a 1,4-benzosemiquinone + NAD(+). The enzyme catalyses N,N-dimethyl-1,4-phenylenediamine + anthranilate + 2 NAD(+) = 2-(4-dimethylaminophenyl)diazenylbenzoate + 2 NADH + 2 H(+). In terms of biological role, quinone reductase that provides resistance to thiol-specific stress caused by electrophilic quinones. Its function is as follows. Also exhibits azoreductase activity. Catalyzes the reductive cleavage of the azo bond in aromatic azo compounds to the corresponding amines. The protein is FMN-dependent NADH:quinone oxidoreductase 1 of Mesoplasma florum (strain ATCC 33453 / NBRC 100688 / NCTC 11704 / L1) (Acholeplasma florum).